The primary structure comprises 122 residues: MIQQESRLRVADNSGAREILTIKVLGGSGRKTANIGDVIVATVKQATPGGVVKKGEVVKAVIVRTKSGARRADGSYIKFDENAAVIIRDDKSPRGTRIFGPVARELRENNFMKIVSLAPEVL.

It belongs to the universal ribosomal protein uL14 family. As to quaternary structure, part of the 50S ribosomal subunit. Forms a cluster with proteins L3 and L19. In the 70S ribosome, L14 and L19 interact and together make contacts with the 16S rRNA in bridges B5 and B8.

Its function is as follows. Binds to 23S rRNA. Forms part of two intersubunit bridges in the 70S ribosome. The polypeptide is Large ribosomal subunit protein uL14 (Enterococcus faecalis (strain ATCC 700802 / V583)).